We begin with the raw amino-acid sequence, 348 residues long: Phospho-N-acetylmuramoyl-pentapeptide-transferase (348 aa).

10 helical membrane passes run 11 to 31 (SWML…IFLG), 68 to 88 (AGGI…LPLG), 92 to 112 (TWLF…DDII), 128 to 148 (FVIQ…IYKG), 165 to 185 (VGHS…TIVG), 196 to 216 (LDGL…VVAL), 222 to 242 (PLAQ…FAFL), 251 to 271 (VFMG…CAVM), 276 to 296 (LLLI…ILQV), and 326 to 346 (VVAR…IAAL).

Belongs to the glycosyltransferase 4 family. MraY subfamily. Requires Mg(2+) as cofactor.

The protein resides in the cell inner membrane. The enzyme catalyses UDP-N-acetyl-alpha-D-muramoyl-L-alanyl-gamma-D-glutamyl-meso-2,6-diaminopimeloyl-D-alanyl-D-alanine + di-trans,octa-cis-undecaprenyl phosphate = di-trans,octa-cis-undecaprenyl diphospho-N-acetyl-alpha-D-muramoyl-L-alanyl-D-glutamyl-meso-2,6-diaminopimeloyl-D-alanyl-D-alanine + UMP. The protein operates within cell wall biogenesis; peptidoglycan biosynthesis. In terms of biological role, catalyzes the initial step of the lipid cycle reactions in the biosynthesis of the cell wall peptidoglycan: transfers peptidoglycan precursor phospho-MurNAc-pentapeptide from UDP-MurNAc-pentapeptide onto the lipid carrier undecaprenyl phosphate, yielding undecaprenyl-pyrophosphoryl-MurNAc-pentapeptide, known as lipid I. In Chlamydia caviae (strain ATCC VR-813 / DSM 19441 / 03DC25 / GPIC) (Chlamydophila caviae), this protein is Phospho-N-acetylmuramoyl-pentapeptide-transferase.